Consider the following 307-residue polypeptide: UDP-N-acetylenolpyruvoylglucosamine reductase (307 aa).

Residues 34-199 (RVGGPAQVLF…TAVRFRGTPS (166 aa)) enclose the FAD-binding PCMH-type domain. Residue R179 is part of the active site. Residue S228 is the Proton donor of the active site. Residue E298 is part of the active site.

The protein belongs to the MurB family. The cofactor is FAD.

It is found in the cytoplasm. It catalyses the reaction UDP-N-acetyl-alpha-D-muramate + NADP(+) = UDP-N-acetyl-3-O-(1-carboxyvinyl)-alpha-D-glucosamine + NADPH + H(+). It functions in the pathway cell wall biogenesis; peptidoglycan biosynthesis. Its function is as follows. Cell wall formation. The polypeptide is UDP-N-acetylenolpyruvoylglucosamine reductase (Bradyrhizobium sp. (strain ORS 278)).